The primary structure comprises 953 residues: Trafficking kinesin-binding protein 1 (953 aa).

The region spanning 47 to 354 (LEEQLPHYKL…EELKNLRNKT (308 aa)) is the HAP1 N-terminal domain. Residues 104–356 (QMTKTYNDID…LKNLRNKTMP (253 aa)) are a coiled coil. An interaction with HGS region spans residues 359–509 (TSRRYHSLGL…RRLSLRRENY (151 aa)). O-linked (GlcNAc) serine glycosylation occurs at serine 447. Residues 472-495 (AADLGNDERSKKPGTPGTPGSHDL) are disordered. Positions 492–532 (SHDLETALRRLSLRRENYLSERRFFEEEQERKLQELAEKGE) form a coiled coil. A Phosphoserine modification is found at serine 537. The interaction with OGT stretch occupies residues 658-672 (PGKCMSQTNSTFTFT). Serine 680 and serine 719 each carry an O-linked (GlcNAc) serine glycan. Position 719 is a phosphoserine (serine 719). The tract at residues 777 to 796 (VIPSTPPNSPMQTPTSSPPS) is disordered. A compositionally biased stretch (low complexity) spans 786-796 (PMQTPTSSPPS). Position 919 is a phosphoserine (serine 919). An O-linked (GlcNAc) threonine glycan is attached at threonine 935.

Belongs to the milton family. In terms of assembly, interacts with RHOT1 and RHOT2. Found in a complex with KIF5B, OGT, RHOT1 and RHOT2. Interacts with HGS. Interacts with GABRA1. Interacts with KIF5C. Interacts with OGT; stable interaction is not required for glycosylation of this protein by OGT. Isoform 1 interacts with OGT. In terms of processing, O-glycosylated. Glycosylated by OGT; glycosylation in response to increased extracellular glucose levels is required for and leads to regulation of mitochondrial motility by OGT. As to expression, high expression in spinal cord and moderate expression in all other tissues and specific brain regions examined. Expressed in all cell lines examined.

The protein resides in the cytoplasm. It localises to the nucleus. Its subcellular location is the mitochondrion. It is found in the early endosome. The protein localises to the endosome. The protein resides in the mitochondrion membrane. It localises to the cell cortex. In terms of biological role, involved in the regulation of endosome-to-lysosome trafficking, including endocytic trafficking of EGF-EGFR complexes and GABA-A receptors. Involved in mitochondrial motility. When O-glycosylated, abolishes mitochondrial motility. Crucial for recruiting OGT to the mitochondrial surface of neuronal processes. TRAK1 and RHOT form an essential protein complex that links KIF5 to mitochondria for light chain-independent, anterograde transport of mitochondria. The polypeptide is Trafficking kinesin-binding protein 1 (TRAK1) (Homo sapiens (Human)).